The primary structure comprises 365 residues: Peptide chain release factor 2 (365 aa).

Gln-252 carries the post-translational modification N5-methylglutamine.

This sequence belongs to the prokaryotic/mitochondrial release factor family. Post-translationally, methylated by PrmC. Methylation increases the termination efficiency of RF2.

The protein resides in the cytoplasm. Peptide chain release factor 2 directs the termination of translation in response to the peptide chain termination codons UGA and UAA. The protein is Peptide chain release factor 2 of Pectobacterium atrosepticum (strain SCRI 1043 / ATCC BAA-672) (Erwinia carotovora subsp. atroseptica).